Reading from the N-terminus, the 188-residue chain is UPF0301 protein Smal_0940 (188 aa).

It belongs to the UPF0301 (AlgH) family.

This Stenotrophomonas maltophilia (strain R551-3) protein is UPF0301 protein Smal_0940.